We begin with the raw amino-acid sequence, 653 residues long: Extracellular metalloproteinase (653 aa).

An N-terminal signal peptide occupies residues 1 to 19 (MRSFLLASLASLSVISVYG). Positions 20 to 244 (HPHARSTLTR…VHAVVDYSAD (225 aa)) are excised as a propeptide. 3 N-linked (GlcNAc...) asparagine glycosylation sites follow: asparagine 327, asparagine 336, and asparagine 412. Histidine 429 serves as a coordination point for Zn(2+). The active site involves glutamate 430. Position 433 (histidine 433) interacts with Zn(2+). 2 N-linked (GlcNAc...) asparagine glycosylation sites follow: asparagine 636 and asparagine 637.

This sequence belongs to the peptidase M36 family. Zn(2+) is required as a cofactor.

The protein resides in the secreted. Functionally, secreted metalloproteinase that allows assimilation of proteinaceous substrates. This is Extracellular metalloproteinase (MEP) from Pyrenophora tritici-repentis (strain Pt-1C-BFP) (Wheat tan spot fungus).